The chain runs to 421 residues: Serine--tRNA ligase (421 aa).

Position 229-231 (229-231 (TAE)) interacts with L-serine. Position 260-262 (260-262 (RSE)) interacts with ATP. Residue Glu283 coordinates L-serine. 347-350 (EISS) is an ATP binding site. Position 382 (Ser382) interacts with L-serine.

The protein belongs to the class-II aminoacyl-tRNA synthetase family. Type-1 seryl-tRNA synthetase subfamily. Homodimer. The tRNA molecule binds across the dimer.

It is found in the cytoplasm. It carries out the reaction tRNA(Ser) + L-serine + ATP = L-seryl-tRNA(Ser) + AMP + diphosphate + H(+). The catalysed reaction is tRNA(Sec) + L-serine + ATP = L-seryl-tRNA(Sec) + AMP + diphosphate + H(+). The protein operates within aminoacyl-tRNA biosynthesis; selenocysteinyl-tRNA(Sec) biosynthesis; L-seryl-tRNA(Sec) from L-serine and tRNA(Sec): step 1/1. In terms of biological role, catalyzes the attachment of serine to tRNA(Ser). Is also able to aminoacylate tRNA(Sec) with serine, to form the misacylated tRNA L-seryl-tRNA(Sec), which will be further converted into selenocysteinyl-tRNA(Sec). In Symbiobacterium thermophilum (strain DSM 24528 / JCM 14929 / IAM 14863 / T), this protein is Serine--tRNA ligase.